Consider the following 504-residue polypeptide: Maturase K (504 aa).

This sequence belongs to the intron maturase 2 family. MatK subfamily.

It localises to the plastid. The protein resides in the chloroplast. Functionally, usually encoded in the trnK tRNA gene intron. Probably assists in splicing its own and other chloroplast group II introns. The chain is Maturase K from Lupinus argenteus (Silvery lupine).